Consider the following 125-residue polypeptide: Large ribosomal subunit protein bL21 (125 aa).

Over residues 75–89 (FKKRRRQNSKRKRGH) the composition is skewed to basic residues. Disordered stretches follow at residues 75–94 (FKKRRRQNSKRKRGHRQDLT) and 103–125 (AGGASPAAAAASSETPAASAPEA). Residues 106 to 125 (ASPAAAAASSETPAASAPEA) are compositionally biased toward low complexity.

The protein belongs to the bacterial ribosomal protein bL21 family. Part of the 50S ribosomal subunit. Contacts protein L20.

In terms of biological role, this protein binds to 23S rRNA in the presence of protein L20. In Methylocella silvestris (strain DSM 15510 / CIP 108128 / LMG 27833 / NCIMB 13906 / BL2), this protein is Large ribosomal subunit protein bL21.